Reading from the N-terminus, the 603-residue chain is Elongation factor 4 (603 aa).

The 183-residue stretch at 2-184 (NHIRNFSIIA…AVVALIPAPK (183 aa)) folds into the tr-type G domain. GTP contacts are provided by residues 14–19 (DHGKST) and 131–134 (NKMD).

Belongs to the TRAFAC class translation factor GTPase superfamily. Classic translation factor GTPase family. LepA subfamily.

It is found in the cell inner membrane. It catalyses the reaction GTP + H2O = GDP + phosphate + H(+). Required for accurate and efficient protein synthesis under certain stress conditions. May act as a fidelity factor of the translation reaction, by catalyzing a one-codon backward translocation of tRNAs on improperly translocated ribosomes. Back-translocation proceeds from a post-translocation (POST) complex to a pre-translocation (PRE) complex, thus giving elongation factor G a second chance to translocate the tRNAs correctly. Binds to ribosomes in a GTP-dependent manner. This chain is Elongation factor 4, found in Polaromonas naphthalenivorans (strain CJ2).